The primary structure comprises 303 residues: Recombination-associated protein RdgC (303 aa).

This sequence belongs to the RdgC family.

It localises to the cytoplasm. The protein localises to the nucleoid. In terms of biological role, may be involved in recombination. This Salmonella newport (strain SL254) protein is Recombination-associated protein RdgC.